Consider the following 668-residue polypeptide: UvrABC system protein B (668 aa).

Residues asparagine 25–glutamate 170 form the Helicase ATP-binding domain. Glycine 38–threonine 45 serves as a coordination point for ATP. Positions tyrosine 91–isoleucine 114 match the Beta-hairpin motif. The region spanning glutamine 429–leucine 595 is the Helicase C-terminal domain. Residues lysine 622 to lysine 657 form the UVR domain.

Belongs to the UvrB family. In terms of assembly, forms a heterotetramer with UvrA during the search for lesions. Interacts with UvrC in an incision complex.

It is found in the cytoplasm. In terms of biological role, the UvrABC repair system catalyzes the recognition and processing of DNA lesions. A damage recognition complex composed of 2 UvrA and 2 UvrB subunits scans DNA for abnormalities. Upon binding of the UvrA(2)B(2) complex to a putative damaged site, the DNA wraps around one UvrB monomer. DNA wrap is dependent on ATP binding by UvrB and probably causes local melting of the DNA helix, facilitating insertion of UvrB beta-hairpin between the DNA strands. Then UvrB probes one DNA strand for the presence of a lesion. If a lesion is found the UvrA subunits dissociate and the UvrB-DNA preincision complex is formed. This complex is subsequently bound by UvrC and the second UvrB is released. If no lesion is found, the DNA wraps around the other UvrB subunit that will check the other stand for damage. The chain is UvrABC system protein B from Borreliella burgdorferi (strain ZS7) (Borrelia burgdorferi).